The following is an 822-amino-acid chain: Sodium/hydrogen exchanger 1 (822 aa).

The Extracellular portion of the chain corresponds to 1–102 (MMLRWSGIWG…FPVLDIDYLH (102 aa)). Positions 41-73 (SPTANTIRGAEPPRERSIGDVTTAPSEPVHHPD) are disordered. A helical transmembrane segment spans residues 103-125 (VRTPFEISLWILLACLMKIGFHV). The Cytoplasmic segment spans residues 126–134 (IPTISSIVP). Residues 135-152 (ESCLLIVVGLLVGGLIKG) form a helical membrane-spanning segment. Residues 153–162 (VGETPPFLQS) lie on the Extracellular side of the membrane. A helical transmembrane segment spans residues 163–180 (DVFFLFLLPPIILDAGYF). The Cytoplasmic portion of the chain corresponds to 181 to 190 (LPLRQFTENL). The helical transmembrane segment at 191–219 (GTILIFAVVGTLWNAFFLGGLLYAVCLVG) threads the bilayer. The Extracellular segment spans residues 220-226 (GEQINNI). The chain crosses the membrane as a helical span at residues 227-253 (GLLDTLLFGSIISAVDPVAVVAVFEEI). The Cytoplasmic segment spans residues 254-256 (HIN). The helical transmembrane segment at 257–287 (ELLHILVFGESLLNDAVTVVLYHLFEEFANY) threads the bilayer. The Extracellular segment spans residues 288-291 (DSIG). The chain crosses the membrane as a helical span at residues 292–326 (ISDIFLGFLSFFVVALGGVFVGVVYGVIAAFTSRF). The Cytoplasmic portion of the chain corresponds to 327 to 332 (TSHIRV). A helical transmembrane segment spans residues 333–345 (IEPLFVFLYSYMA). The Extracellular portion of the chain corresponds to 346–354 (YLSAELFHL). Residues 355-375 (SGIMALIASGVVMRPYVEANI) traverse the membrane as a helical segment. Topologically, residues 376–377 (SH) are cytoplasmic. The helical transmembrane segment at 378 to 408 (KSHTTIKYFLKMWSSVSETLIFIFLGVSTVA) threads the bilayer. Residues 409 to 414 (GSHQWN) lie on the Extracellular side of the membrane. A helical membrane pass occupies residues 415-442 (WTFVISTLLFCLIARVLGVLVLTWFINK). The Cytoplasmic segment spans residues 443–448 (FRIVKL). A helical membrane pass occupies residues 449 to 473 (TPKDQFIIAYGGLRGAIAFSLGYLM). Topologically, residues 474–479 (DKKHFP) are extracellular. Residues 480-509 (MCDLFLTAIITVIFFTVFVQGMTIRPLVDL) form a helical membrane-spanning segment. Residues 507-549 (VDLLAVKKKQETKRSINEEIHTQFLDHLLTGIEDICGHYGHHH) are interaction with TESC. At 510–822 (LAVKKKQETK…EGEPFIPKGE (313 aa)) the chain is on the cytoplasmic side. A PI(4,5)P2-binding region region spans residues 513-520 (KKKQETKR). Positions 519-549 (KRSINEEIHTQFLDHLLTGIEDICGHYGHHH) are interaction with CHP2. Residues 544 to 549 (HYGHHH) are confers pH-dependent PI(4,5)P2 binding. Residues 556 to 564 (RFNKKYVKK) form a PI(4,5)P2-binding region region. Phosphoserine occurs at positions 603 and 606. Threonine 607 carries the post-translational modification Phosphothreonine. Phosphoserine is present on residues serine 609 and serine 652. The interaction with TESC stretch occupies residues 637–822 (KILRSNLQKT…EGEPFIPKGE (186 aa)). An interaction with CALM1 region spans residues 637 to 822 (KILRSNLQKT…EGEPFIPKGE (186 aa)). The interaction with PPP3CA stretch occupies residues 688–691 (LTVP). A phosphoserine mark is found at serine 697, serine 701, and serine 707. Positions 719 to 724 (PVITID) are interaction with PPP3CA. 3 positions are modified to phosphoserine: serine 727, serine 730, and serine 733. Residues 752–822 (PTRLTRGEED…EGEPFIPKGE (71 aa)) are disordered. Threonine 756 bears the Phosphothreonine mark. Positions 759–768 (EEDEDEDEDG) are enriched in acidic residues. The residue at position 786 (threonine 786) is a Phosphothreonine. 3 positions are modified to phosphoserine: serine 792, serine 794, and serine 803.

Belongs to the monovalent cation:proton antiporter 1 (CPA1) transporter (TC 2.A.36) family. As to quaternary structure, homodimer; dimerization is crucial for its function. Oligomer. Interacts with CALM in a calcium-dependent manner. Interacts with TESC. Interacts (via the juxtamembrane region of the cytoplasmic C-terminal domain) with CHP1; the interaction occurs at the plasma membrane in a calcium-dependent manner. Interacts with CHP2; the interaction occurs in a calcium-dependent manner. Interacts with EZR; regulates the cytoskeletal interactions of SLC9A1 and promotes stress fiber formation. Ubiquitinated, leading to its degradation by the proteasome. Ubiquitination is reduced by CHP1. In terms of processing, O-glycosylated. Post-translationally, palmitoylated; may play a major role in SLC9A1 regulation. Phosphorylation at Thr-786 increases SLC9A1 activity. Specifically dephosphorylated at Thr-786 by PPP3CA that negatively regulates SLC9A1 activity. Phosphorylation at Ser-652 by AKT1 reduces SLC9A1 binding to CALM1.

Its subcellular location is the cell membrane. The protein resides in the basolateral cell membrane. The enzyme catalyses Na(+)(in) + H(+)(out) = Na(+)(out) + H(+)(in). It catalyses the reaction Li(+)(out) + H(+)(in) = Li(+)(in) + H(+)(out). It carries out the reaction Li(+)(in) + Na(+)(out) = Li(+)(out) + Na(+)(in). Its activity is regulated as follows. Activated at acidic pHs. Inhibited by amiloride and 5-amino-substituted derivatives. Inhibited by cariporide and eniporide. Phosphatidylinositol 4,5-bisphosphate (PI(4,5)P2) and phosphatidylinositol 3,4,5-trisphosphate (PI(3,4,5)P3) bind and differentially regulate SLC9A1 activity. In terms of biological role, electroneutral Na(+) /H(+) antiporter that extrudes Na(+) in exchange for external protons driven by the inward sodium ion chemical gradient, protecting cells from acidification that occurs from metabolism. Exchanges intracellular H(+) ions for extracellular Na(+) in 1:1 stoichiometry. Plays a key role in maintening intracellular pH neutral and cell volume, and thus is important for cell growth, proliferation, migration and survival. In addition, can transport lithium Li(+) and also functions as a Na(+)/Li(+) antiporter. SLC9A1 also functions in membrane anchoring and organization of scaffolding complexes that coordinate signaling inputs. The protein is Sodium/hydrogen exchanger 1 (SLC9A1) of Cricetulus griseus (Chinese hamster).